Here is a 4114-residue protein sequence, read N- to C-terminus: Ferrichrome siderophore peptide synthetase (4114 aa).

4 consecutive Carrier domains span residues 797 to 874, 1947 to 2021, 3020 to 3093, and 3574 to 3650; these read DPAT…QSSG, TDSE…IDKL, TQSE…MQSS, and QALS…SQTN. 4 positions are modified to O-(pantetheine 4'-phosphoryl)serine: Ser-835, Ser-1982, Ser-3054, and Ser-3611. The disordered stretch occupies residues 4040–4061; that stretch reads LDYSHHSQHSTHDRTPPSTPHV. Residues 4041–4054 show a composition bias toward basic and acidic residues; it reads DYSHHSQHSTHDRT.

It belongs to the ATP-dependent AMP-binding enzyme family. It depends on pantetheine 4'-phosphate as a cofactor.

Its pathway is siderophore biosynthesis; ferrichrome biosynthesis. Functionally, multidomain peptide synthetase involved in ferrichrome biosynthesis. In Mycosarcoma maydis (Corn smut fungus), this protein is Ferrichrome siderophore peptide synthetase (SID2).